A 160-amino-acid chain; its full sequence is Mediator of RNA polymerase II transcription subunit 31 (160 aa).

The interval 124-160 (GTGIENEQGGTEANNPGEAEGEQTKGTADQQDGSSKT) is disordered. Over residues 147-160 (TKGTADQQDGSSKT) the composition is skewed to polar residues.

This sequence belongs to the Mediator complex subunit 31 family. Component of the Mediator complex.

The protein resides in the nucleus. Functionally, component of the Mediator complex, a coactivator involved in the regulated transcription of nearly all RNA polymerase II-dependent genes. Mediator functions as a bridge to convey information from gene-specific regulatory proteins to the basal RNA polymerase II transcription machinery. Mediator is recruited to promoters by direct interactions with regulatory proteins and serves as a scaffold for the assembly of a functional preinitiation complex with RNA polymerase II and the general transcription factors. The polypeptide is Mediator of RNA polymerase II transcription subunit 31 (soh1) (Aspergillus terreus (strain NIH 2624 / FGSC A1156)).